The sequence spans 205 residues: Ribonuclease HII (205 aa).

One can recognise an RNase H type-2 domain in the interval 14–205; it reads SLISGIDEAG…SFRLKQLGEK (192 aa). A divalent metal cation-binding residues include D20, E21, and D117.

This sequence belongs to the RNase HII family. The cofactor is Mn(2+). Mg(2+) is required as a cofactor.

The protein resides in the cytoplasm. The catalysed reaction is Endonucleolytic cleavage to 5'-phosphomonoester.. Endonuclease that specifically degrades the RNA of RNA-DNA hybrids. In Chlorobium phaeobacteroides (strain DSM 266 / SMG 266 / 2430), this protein is Ribonuclease HII.